The following is a 737-amino-acid chain: SANT and BTB domain regulator of class switch recombination (737 aa).

The SANT domain maps to 21–59 (DMILYPLIGIPQTINWETVARLVPGLTPKECVKRFDELK). Positions 147-255 (MVIHVCDEAK…QCIQYCHKNM (109 aa)) constitute a BTB domain. Residues 555-576 (SEEEEYTTGSEVTEDEVGDEEE) are compositionally biased toward acidic residues. Residues 555–618 (SEEEEYTTGS…TLEKSTSRDV (64 aa)) form a disordered region. The span at 580–595 (KQRKKEKPKKFTKPPK) shows a compositional bias: basic residues. Residues 604 to 615 (QKKEKTLEKSTS) are compositionally biased toward basic and acidic residues.

Belongs to the KIAA1841 family. In terms of assembly, homodimer. Interacts (via the BTB domain) with HDAC1 and NCOR2.

Negatively regulates class switch recombination or isotype switching in splenic B-cells. The chain is SANT and BTB domain regulator of class switch recombination from Rattus norvegicus (Rat).